Reading from the N-terminus, the 89-residue chain is Submaxillary mucin (89 aa).

Positions 1 to 89 (AGSVGRTAGG…VGGSPVATTL (89 aa)) are disordered. O-linked (GalNAc...) serine; partial glycosylation occurs at Ser-3. O-linked (GalNAc...) threonine; partial glycosylation is found at Thr-7 and Thr-14. O-linked (GalNAc...) serine; partial glycosylation occurs at Ser-15. An O-linked (GalNAc...) threonine; partial glycan is attached at Thr-23. Ser-25 carries O-linked (GalNAc...) serine; partial glycosylation. Thr-27 carries O-linked (GalNAc...) threonine; partial glycosylation. O-linked (GalNAc...) serine; partial glycosylation occurs at Ser-29. O-linked (GalNAc...) threonine; partial glycosylation is present at Thr-34. Ser-38 carries an O-linked (GalNAc...) serine; partial glycan. O-linked (GalNAc...) threonine; partial glycosylation occurs at Thr-42. Ser-47 and Ser-49 each carry an O-linked (GalNAc...) serine; partial glycan. Thr-50 carries an O-linked (GalNAc...) threonine; partial glycan. Ser-54 carries O-linked (GalNAc...) serine; partial glycosylation. A compositionally biased stretch (low complexity) spans 56–71 (APGTTLAGRAGTTLGP). O-linked (GalNAc...) threonine; partial glycans are attached at residues Thr-59, Thr-60, Thr-67, and Thr-68. 2 O-linked (GalNAc...) serine; partial glycosylation sites follow: Ser-73 and Ser-76. The O-linked (GalNAc...) threonine; partial glycan is linked to Thr-78. An O-linked (GalNAc...) serine; partial glycan is attached at Ser-83.

Post-translationally, heavily O-glycosylated at most but not all Ser and Thr residues. In terms of tissue distribution, expressed in the submaxillary salivary gland.

The protein localises to the secreted. The sequence is that of Submaxillary mucin from Canis lupus familiaris (Dog).